Consider the following 108-residue polypeptide: Phosphoribosyl-ATP pyrophosphatase (108 aa).

The protein belongs to the PRA-PH family.

It is found in the cytoplasm. It catalyses the reaction 1-(5-phospho-beta-D-ribosyl)-ATP + H2O = 1-(5-phospho-beta-D-ribosyl)-5'-AMP + diphosphate + H(+). It participates in amino-acid biosynthesis; L-histidine biosynthesis; L-histidine from 5-phospho-alpha-D-ribose 1-diphosphate: step 2/9. In Thiobacillus denitrificans (strain ATCC 25259 / T1), this protein is Phosphoribosyl-ATP pyrophosphatase.